The sequence spans 476 residues: Glycogen synthase (476 aa).

Lysine 15 is an ADP-alpha-D-glucose binding site.

This sequence belongs to the glycosyltransferase 1 family. Bacterial/plant glycogen synthase subfamily.

It catalyses the reaction [(1-&gt;4)-alpha-D-glucosyl](n) + ADP-alpha-D-glucose = [(1-&gt;4)-alpha-D-glucosyl](n+1) + ADP + H(+). It functions in the pathway glycan biosynthesis; glycogen biosynthesis. Functionally, synthesizes alpha-1,4-glucan chains using ADP-glucose. The polypeptide is Glycogen synthase (Streptococcus mutans serotype c (strain ATCC 700610 / UA159)).